A 286-amino-acid polypeptide reads, in one-letter code: P2R1A-PPP2R2A-interacting phosphatase regulator 1 (286 aa).

A disordered region spans residues 1-46 (MAQEKMELDLELPAGTGASPAEGGGPGSGGLRRSNSAPLIHGLSDS). Residue serine 34 is modified to Phosphoserine. The residue at position 36 (serine 36) is a Phosphoserine; by CHEK1. A phosphoserine mark is found at serine 44, serine 47, serine 61, and serine 75. Lysine 88 participates in a covalent cross-link: Glycyl lysine isopeptide (Lys-Gly) (interchain with G-Cter in SUMO1). Phosphoserine occurs at positions 142 and 146. At threonine 148 the chain carries Phosphothreonine. A disordered region spans residues 166–187 (SNGLPPSPIPSPTTRFTTRRSQ). A compositionally biased stretch (low complexity) spans 177-187 (PTTRFTTRRSQ). A phosphoserine mark is found at serine 186 and serine 188. The interval 238-286 (VSSDTLDGNSSSAGSSCNSPAKVSTTTDSPVSPAQAASPFIPVDELSSK) is disordered. The span at 245 to 256 (GNSSSAGSSCNS) shows a compositional bias: low complexity. A compositionally biased stretch (polar residues) spans 258 to 269 (AKVSTTTDSPVS). A phosphoserine mark is found at serine 266, serine 269, and serine 275.

The protein belongs to the FAM122 family. In terms of assembly, interacts with PPP2CA and PPP2R1A. Interacts (via its N-terminus) with PPP2R2A; the interaction is direct and this interaction inhibits PP2A activity. The CHEK1-mediated Ser-36 phosphorylated form interacts with 14-3-3 proteins. CHEK1-mediated phosphorylation at Ser-36 negatively regulates its ability to inhibit serine/threonine-protein phosphatase 2A (PP2A) activity. Phosphorylation leads to its release from the PP2A complex and its sequestration by 14-3-3 proteins in the cytoplasm resulting in its inability to translocate to the nucleus, where it otherwise inhibits PP2A.

The protein resides in the nucleus. The protein localises to the cytoplasm. Its function is as follows. Acts as an inhibitor of serine/threonine-protein phosphatase 2A (PP2A) activity. Inhibits PP2A activity by blocking the substrate binding site on PPP2R2A and the active site of PPP2CA. Potentiates ubiquitin-mediated proteasomal degradation of serine/threonine-protein phosphatase 2A catalytic subunit alpha (PPP2CA). Inhibits PP2A-mediated dephosphorylation of WEE1, promoting ubiquitin-mediated proteolysis of WEE1, thereby releasing G2/M checkpoint. This Rattus norvegicus (Rat) protein is P2R1A-PPP2R2A-interacting phosphatase regulator 1.